We begin with the raw amino-acid sequence, 374 residues long: N-acetyldiaminopimelate deacetylase (374 aa).

Residue Asp-68 is part of the active site. The active-site Proton acceptor is Glu-127.

This sequence belongs to the peptidase M20A family. N-acetyldiaminopimelate deacetylase subfamily.

The enzyme catalyses N-acetyl-(2S,6S)-2,6-diaminopimelate + H2O = (2S,6S)-2,6-diaminopimelate + acetate. It participates in amino-acid biosynthesis; L-lysine biosynthesis via DAP pathway; LL-2,6-diaminopimelate from (S)-tetrahydrodipicolinate (acetylase route): step 3/3. Catalyzes the conversion of N-acetyl-diaminopimelate to diaminopimelate and acetate. The protein is N-acetyldiaminopimelate deacetylase of Shouchella clausii (strain KSM-K16) (Alkalihalobacillus clausii).